We begin with the raw amino-acid sequence, 43 residues long: Protein PsbN (43 aa).

A helical transmembrane segment spans residues 5–27 (TLVAISISRLLVSFTGYALYTAF).

This sequence belongs to the PsbN family.

It localises to the plastid. Its subcellular location is the chloroplast thylakoid membrane. May play a role in photosystem I and II biogenesis. The sequence is that of Protein PsbN from Cycas taitungensis (Prince sago).